A 180-amino-acid chain; its full sequence is Large ribosomal subunit protein uL16 (180 aa).

It belongs to the universal ribosomal protein uL16 family.

The protein is Large ribosomal subunit protein uL16 of Hyperthermus butylicus (strain DSM 5456 / JCM 9403 / PLM1-5).